We begin with the raw amino-acid sequence, 314 residues long: Acetyl-coenzyme A carboxylase carboxyl transferase subunit alpha (314 aa).

Positions 38-292 constitute a CoA carboxyltransferase C-terminal domain; sequence RLERKSAALL…ANAIDEELDA (255 aa).

It belongs to the AccA family. As to quaternary structure, acetyl-CoA carboxylase is a heterohexamer composed of biotin carboxyl carrier protein (AccB), biotin carboxylase (AccC) and two subunits each of ACCase subunit alpha (AccA) and ACCase subunit beta (AccD).

It is found in the cytoplasm. The catalysed reaction is N(6)-carboxybiotinyl-L-lysyl-[protein] + acetyl-CoA = N(6)-biotinyl-L-lysyl-[protein] + malonyl-CoA. It participates in lipid metabolism; malonyl-CoA biosynthesis; malonyl-CoA from acetyl-CoA: step 1/1. Functionally, component of the acetyl coenzyme A carboxylase (ACC) complex. First, biotin carboxylase catalyzes the carboxylation of biotin on its carrier protein (BCCP) and then the CO(2) group is transferred by the carboxyltransferase to acetyl-CoA to form malonyl-CoA. This Erythrobacter litoralis (strain HTCC2594) protein is Acetyl-coenzyme A carboxylase carboxyl transferase subunit alpha.